The primary structure comprises 1407 residues: DNA-directed RNA polymerase subunit beta' (1407 aa).

Residues cysteine 70, cysteine 72, cysteine 85, and cysteine 88 each coordinate Zn(2+). Residues aspartate 460, aspartate 462, and aspartate 464 each contribute to the Mg(2+) site. Residues cysteine 814, cysteine 888, cysteine 895, and cysteine 898 each contribute to the Zn(2+) site. Lysine 972 is modified (N6-acetyllysine).

It belongs to the RNA polymerase beta' chain family. In terms of assembly, the RNAP catalytic core consists of 2 alpha, 1 beta, 1 beta' and 1 omega subunit. When a sigma factor is associated with the core the holoenzyme is formed, which can initiate transcription. Mg(2+) serves as cofactor. Requires Zn(2+) as cofactor.

It carries out the reaction RNA(n) + a ribonucleoside 5'-triphosphate = RNA(n+1) + diphosphate. In terms of biological role, DNA-dependent RNA polymerase catalyzes the transcription of DNA into RNA using the four ribonucleoside triphosphates as substrates. The sequence is that of DNA-directed RNA polymerase subunit beta' from Escherichia coli O1:K1 / APEC.